A 308-amino-acid chain; its full sequence is Urease subunit beta (308 aa).

In terms of domain architecture, Urease spans 131–308; sequence GGIDTHIHFI…STNPTIPFTK (178 aa). Residues His136, His138, Lys219, His248, and His274 each coordinate Ni(2+). Lys219 carries the N6-carboxylysine modification.

It belongs to the metallo-dependent hydrolases superfamily. Urease alpha subunit family. Heterohexamer of 3 UreA (alpha) and 3 UreB (beta) subunits. Ni cation is required as a cofactor. Carboxylation allows a single lysine to coordinate two nickel ions.

It localises to the cytoplasm. It carries out the reaction urea + 2 H2O + H(+) = hydrogencarbonate + 2 NH4(+). The protein operates within nitrogen metabolism; urea degradation; CO(2) and NH(3) from urea (urease route): step 1/1. In Helicobacter mustelae, this protein is Urease subunit beta (ureB).